A 384-amino-acid polypeptide reads, in one-letter code: S-adenosylmethionine synthase (384 aa).

His15 lines the ATP pocket. Asp17 contacts Mg(2+). Position 43 (Glu43) interacts with K(+). 2 residues coordinate L-methionine: Glu56 and Gln99. Positions 99-109 are flexible loop; that stretch reads QSADINQGVDR. ATP contacts are provided by residues 164-166, 230-231, Asp239, 245-246, Ala262, and Lys266; these read DAK, RF, and RK. Position 239 (Asp239) interacts with L-methionine. Lys270 lines the L-methionine pocket.

The protein belongs to the AdoMet synthase family. In terms of assembly, homotetramer; dimer of dimers. Mg(2+) is required as a cofactor. K(+) serves as cofactor.

Its subcellular location is the cytoplasm. The catalysed reaction is L-methionine + ATP + H2O = S-adenosyl-L-methionine + phosphate + diphosphate. It functions in the pathway amino-acid biosynthesis; S-adenosyl-L-methionine biosynthesis; S-adenosyl-L-methionine from L-methionine: step 1/1. In terms of biological role, catalyzes the formation of S-adenosylmethionine (AdoMet) from methionine and ATP. The overall synthetic reaction is composed of two sequential steps, AdoMet formation and the subsequent tripolyphosphate hydrolysis which occurs prior to release of AdoMet from the enzyme. The sequence is that of S-adenosylmethionine synthase from Haemophilus influenzae (strain PittGG).